We begin with the raw amino-acid sequence, 145 residues long: D-aminoacyl-tRNA deacylase (145 aa).

The Gly-cisPro motif, important for rejection of L-amino acids signature appears at 137 to 138; it reads GP.

Belongs to the DTD family. In terms of assembly, homodimer.

Its subcellular location is the cytoplasm. The enzyme catalyses glycyl-tRNA(Ala) + H2O = tRNA(Ala) + glycine + H(+). It catalyses the reaction a D-aminoacyl-tRNA + H2O = a tRNA + a D-alpha-amino acid + H(+). In terms of biological role, an aminoacyl-tRNA editing enzyme that deacylates mischarged D-aminoacyl-tRNAs. Also deacylates mischarged glycyl-tRNA(Ala), protecting cells against glycine mischarging by AlaRS. Acts via tRNA-based rather than protein-based catalysis; rejects L-amino acids rather than detecting D-amino acids in the active site. By recycling D-aminoacyl-tRNA to D-amino acids and free tRNA molecules, this enzyme counteracts the toxicity associated with the formation of D-aminoacyl-tRNA entities in vivo and helps enforce protein L-homochirality. The polypeptide is D-aminoacyl-tRNA deacylase (Exiguobacterium sibiricum (strain DSM 17290 / CCUG 55495 / CIP 109462 / JCM 13490 / 255-15)).